The chain runs to 362 residues: Adenosine deaminase (362 aa).

Zn(2+)-binding residues include His-19 and His-21. Residues His-21, Asp-23, and Gly-181 each coordinate substrate. His-208 is a Zn(2+) binding site. The Proton donor role is filled by Glu-211. Asp-300 serves as a coordination point for Zn(2+).

Belongs to the metallo-dependent hydrolases superfamily. Adenosine and AMP deaminases family. Adenosine deaminase subfamily. Zn(2+) serves as cofactor.

The enzyme catalyses adenosine + H2O + H(+) = inosine + NH4(+). The catalysed reaction is 2'-deoxyadenosine + H2O + H(+) = 2'-deoxyinosine + NH4(+). In terms of biological role, catalyzes the hydrolytic deamination of adenosine and 2-deoxyadenosine. This chain is Adenosine deaminase, found in Mycolicibacterium gilvum (strain PYR-GCK) (Mycobacterium gilvum (strain PYR-GCK)).